We begin with the raw amino-acid sequence, 151 residues long: Deoxyuridine 5'-triphosphate nucleotidohydrolase (151 aa).

Substrate-binding positions include 70-72, Asn-83, 87-89, and Met-97; these read RSG and LID.

This sequence belongs to the dUTPase family. The cofactor is Mg(2+).

It catalyses the reaction dUTP + H2O = dUMP + diphosphate + H(+). Its pathway is pyrimidine metabolism; dUMP biosynthesis; dUMP from dCTP (dUTP route): step 2/2. Its function is as follows. This enzyme is involved in nucleotide metabolism: it produces dUMP, the immediate precursor of thymidine nucleotides and it decreases the intracellular concentration of dUTP so that uracil cannot be incorporated into DNA. The chain is Deoxyuridine 5'-triphosphate nucleotidohydrolase from Pseudomonas fluorescens (strain SBW25).